The sequence spans 536 residues: Quinate permease (536 aa).

Over 1 to 26 the chain is Cytoplasmic; that stretch reads MTLLALKEDRPTPKAVYNWRVYTCAA. Residues 27-47 form a helical membrane-spanning segment; the sequence is IASFASCMIGYDSAFIGTTLA. The Extracellular segment spans residues 48–74; sequence LPSFKKEFDFASYTPGALALLQSNIVS. The helical transmembrane segment at 75–95 threads the bilayer; the sequence is VYQAGAFFGSLFAFATSYFLG. At 96–98 the chain is on the cytoplasmic side; the sequence is RRK. A helical transmembrane segment spans residues 99–119; the sequence is SLIAFSVVFIIGAAIMLAADG. Residues 120 to 131 lie on the Extracellular side of the membrane; the sequence is QGRGIAPIIAGR. A helical membrane pass occupies residues 132–152; sequence VLAGIGVGGASNMVPIYISEL. Residues 153–160 lie on the Cytoplasmic side of the membrane; sequence APPAVRGR. Residues 161 to 181 traverse the membrane as a helical segment; it reads LVGIYELGWQIGGLVGFWINY. The Extracellular portion of the chain corresponds to 182–195; that stretch reads GVNTTMAPTRSQWL. N-linked (GlcNAc...) asparagine glycosylation occurs at N184. A helical membrane pass occupies residues 196–216; the sequence is IPFAVQLIPAGLLFLGSFWIP. Residues 217–285 are Cytoplasmic-facing; it reads ESPRWLFANG…SLKQRKVQWR (69 aa). The chain crosses the membrane as a helical span at residues 286-306; the sequence is FFLGGMLFLWQNGSGINAINY. At 307–327 the chain is on the extracellular side; sequence YSPTVFRSIGITGTNTGFLTT. The chain crosses the membrane as a helical span at residues 328–349; the sequence is GIFGVVKMVLTIVWLLWLVDLV. Topologically, residues 350–352 are cytoplasmic; that stretch reads GRR. Residues 353–373 traverse the membrane as a helical segment; sequence RMLFIGATGGSLCMWFIGAYI. The Extracellular portion of the chain corresponds to 374-389; the sequence is KIAGPGSTKAEDAKLT. The helical transmembrane segment at 390 to 410 threads the bilayer; that stretch reads SGGIAAIFFFYLWTAFYTPSW. The Cytoplasmic portion of the chain corresponds to 411 to 435; sequence NGTPWVINSEMFDQNTRSLGQASAA. A helical membrane pass occupies residues 436 to 456; it reads ANNWFWNFIISRFTPQMFIKM. The Extracellular portion of the chain corresponds to 457–458; sequence EY. A helical transmembrane segment spans residues 459–479; the sequence is GVYFFFASLMLLSIVFIYFFI. The Cytoplasmic segment spans residues 480-536; the sequence is PETKSIPLEAMDRLFEIKPVHNANKILMAELNFDRNPEREESSLDEKDRVTQTENAV. Over residues 516–530 the composition is skewed to basic and acidic residues; the sequence is PEREESSLDEKDRVT. Positions 516–536 are disordered; that stretch reads PEREESSLDEKDRVTQTENAV.

Belongs to the major facilitator superfamily. Sugar transporter (TC 2.A.1.1) family.

The protein resides in the membrane. The sequence is that of Quinate permease (qa-y) from Neurospora terricola.